The chain runs to 156 residues: Lipoprotein signal peptidase (156 aa).

3 consecutive transmembrane segments (helical) span residues 5-25 (FKFIFYFWGAFVLVFALDQWV), 64-84 (YLHLALIVVLFIYLFWQKTLL), and 89-109 (IAFGMMLGAGVSNLLDRFIHG). Residues Asp-113 and Asp-130 contribute to the active site. Residues 122–142 (NFAIFNVADVMINISVALILI) form a helical membrane-spanning segment.

The protein belongs to the peptidase A8 family.

Its subcellular location is the cell inner membrane. The catalysed reaction is Release of signal peptides from bacterial membrane prolipoproteins. Hydrolyzes -Xaa-Yaa-Zaa-|-(S,diacylglyceryl)Cys-, in which Xaa is hydrophobic (preferably Leu), and Yaa (Ala or Ser) and Zaa (Gly or Ala) have small, neutral side chains.. It participates in protein modification; lipoprotein biosynthesis (signal peptide cleavage). This protein specifically catalyzes the removal of signal peptides from prolipoproteins. In Campylobacter jejuni subsp. jejuni serotype O:23/36 (strain 81-176), this protein is Lipoprotein signal peptidase.